We begin with the raw amino-acid sequence, 154 residues long: Probable transport accessory protein MmpS4 (154 aa).

2 helical membrane passes run 19–39 (IWIP…VYRV) and 97–117 (QLPW…NLVA).

This sequence belongs to the MmpS family.

It is found in the cell membrane. This Mycobacterium leprae (strain TN) protein is Probable transport accessory protein MmpS4.